We begin with the raw amino-acid sequence, 403 residues long: Vacuole membrane protein 1 homolog (403 aa).

Residues 7 to 33 (IVLSNEKDIQLRIQQLEERKEKRKNVK) are a coiled coil. A run of 8 helical transmembrane segments spans residues 65 to 85 (FLLF…YVPG), 102 to 122 (IWWV…LHTF), 150 to 170 (ANSF…WMIL), 175 to 195 (WAAL…YFVA), 240 to 260 (LIGN…NPLF), 263 to 283 (AGIT…ATFI), 294 to 314 (ACFV…SFIE), and 348 to 368 (VGLA…MSIV).

It belongs to the VMP1 family.

The protein localises to the membrane. It localises to the endoplasmic reticulum. It catalyses the reaction a 1,2-diacyl-sn-glycero-3-phospho-L-serine(in) = a 1,2-diacyl-sn-glycero-3-phospho-L-serine(out). The catalysed reaction is cholesterol(in) = cholesterol(out). The enzyme catalyses a 1,2-diacyl-sn-glycero-3-phosphocholine(in) = a 1,2-diacyl-sn-glycero-3-phosphocholine(out). It carries out the reaction a 1,2-diacyl-sn-glycero-3-phosphoethanolamine(in) = a 1,2-diacyl-sn-glycero-3-phosphoethanolamine(out). Phospholipid scramblase involved in lipid homeostasis and membrane dynamics processes. Required for autophagosome formation: participates in early stages of autophagosome biogenesis at the endoplasmic reticulum (ER) membrane by reequilibrating the leaflets of the ER as lipids are extracted. In addition to autophagy, involved in other processes in which phospholipid scramblase activity is required. This is Vacuole membrane protein 1 homolog from Dictyostelium discoideum (Social amoeba).